Consider the following 314-residue polypeptide: Small ribosomal subunit biogenesis GTPase RsgA (314 aa).

The segment at 1–21 (MKRAPTKQPAKPAARGGERAQ) is disordered. Residues 85-246 (SDQFKSKLFA…LIDSPGFQEF (162 aa)) enclose the CP-type G domain. GTP is bound by residues 134–137 (NKID) and 188–196 (GQSGMGKST). Zn(2+) is bound by residues C270, C275, H277, and C283.

Belongs to the TRAFAC class YlqF/YawG GTPase family. RsgA subfamily. In terms of assembly, monomer. Associates with 30S ribosomal subunit, binds 16S rRNA. The cofactor is Zn(2+).

Its subcellular location is the cytoplasm. Its function is as follows. One of several proteins that assist in the late maturation steps of the functional core of the 30S ribosomal subunit. Helps release RbfA from mature subunits. May play a role in the assembly of ribosomal proteins into the subunit. Circularly permuted GTPase that catalyzes slow GTP hydrolysis, GTPase activity is stimulated by the 30S ribosomal subunit. The protein is Small ribosomal subunit biogenesis GTPase RsgA of Burkholderia pseudomallei (strain 1106a).